The chain runs to 196 residues: MNSKDYESTEFYSYKFKNFSTMIIIPMALLVFILIIGSFFAIRQSTVTSTGIVEPQSTLDIANKNYHEGQIIKRNRSKWMVHLDDKKENIVHLLPIIKAKKSVNIVTYFPGNKIGAIKKGQPLHFQLSNANGTTDRLVGEVKEVGIYPVNLHGNNVYEVICKAKLDKDVKYGMEGNAPIITGKSTYFEYFKDKILN.

The helical transmembrane segment at 22–42 threads the bilayer; the sequence is MIIIPMALLVFILIIGSFFAI.

The protein resides in the cell membrane. This is an uncharacterized protein from Lactobacillus acidophilus (strain ATCC 700396 / NCK56 / N2 / NCFM).